Reading from the N-terminus, the 238-residue chain is Uridylate kinase (238 aa).

Residue Lys12 to Gly15 coordinates ATP. Position 54 (Gly54) interacts with UMP. Gly55 and Arg59 together coordinate ATP. UMP contacts are provided by residues Asp74 and Thr135 to Thr142. ATP-binding residues include Thr162, Tyr168, and Asp171.

This sequence belongs to the UMP kinase family. In terms of assembly, homohexamer.

It localises to the cytoplasm. It carries out the reaction UMP + ATP = UDP + ADP. The protein operates within pyrimidine metabolism; CTP biosynthesis via de novo pathway; UDP from UMP (UMPK route): step 1/1. With respect to regulation, inhibited by UTP. Functionally, catalyzes the reversible phosphorylation of UMP to UDP. This Azoarcus sp. (strain BH72) protein is Uridylate kinase.